Reading from the N-terminus, the 101-residue chain is Putative UPF0377 protein YBL108W (101 aa).

This sequence belongs to the UPF0377 family.

This Saccharomyces cerevisiae (strain ATCC 204508 / S288c) (Baker's yeast) protein is Putative UPF0377 protein YBL108W.